The sequence spans 72 residues: Large ribosomal subunit protein uL29 (72 aa).

The protein belongs to the universal ribosomal protein uL29 family.

The chain is Large ribosomal subunit protein uL29 from Caldicellulosiruptor bescii (strain ATCC BAA-1888 / DSM 6725 / KCTC 15123 / Z-1320) (Anaerocellum thermophilum).